Here is a 67-residue protein sequence, read N- to C-terminus: Small ribosomal subunit protein eS17 (67 aa).

It belongs to the eukaryotic ribosomal protein eS17 family.

This Pyrococcus horikoshii (strain ATCC 700860 / DSM 12428 / JCM 9974 / NBRC 100139 / OT-3) protein is Small ribosomal subunit protein eS17.